A 60-amino-acid chain; its full sequence is Large ribosomal subunit protein bL32 (60 aa).

Residues 1 to 27 are disordered; it reads MAVPRNRLSNARKNSKRAHHAKKPKSL. The segment covering 13–25 has biased composition (basic residues); it reads KNSKRAHHAKKPK.

Belongs to the bacterial ribosomal protein bL32 family.

This Protochlamydia amoebophila (strain UWE25) protein is Large ribosomal subunit protein bL32.